A 107-amino-acid polypeptide reads, in one-letter code: MKVVAIFLASCVLFSLIPTHLSHEEPKVAPTEELMFAPSNQPRYCRSRQVFDGSCTDRGTPRTTCFLDFLGARSASEMPKNCDCTPQPNNKRLCECSVICTDCCVKN.

The N-terminal stretch at 1–22 (MKVVAIFLASCVLFSLIPTHLS) is a signal peptide. Intrachain disulfides connect cysteine 45/cysteine 100, cysteine 55/cysteine 84, cysteine 65/cysteine 94, and cysteine 82/cysteine 96.

Belongs to the DEFL family.

It localises to the secreted. The sequence is that of Defensin-like protein 242 (SCRL10) from Arabidopsis thaliana (Mouse-ear cress).